Here is a 67-residue protein sequence, read N- to C-terminus: Probable Sec-independent protein translocase protein TatE (67 aa).

A helical transmembrane segment spans residues 4-21; sequence ISITKLLVVAALVVLLFG.

Belongs to the TatA/E family. TatE subfamily.

It is found in the cell inner membrane. Part of the twin-arginine translocation (Tat) system that transports large folded proteins containing a characteristic twin-arginine motif in their signal peptide across membranes. TatE shares overlapping functions with TatA. The polypeptide is Probable Sec-independent protein translocase protein TatE (Enterobacter cloacae subsp. cloacae (strain ATCC 13047 / DSM 30054 / NBRC 13535 / NCTC 10005 / WDCM 00083 / NCDC 279-56)).